The sequence spans 279 residues: Large ribosomal subunit protein uL2 (279 aa).

The disordered stretch occupies residues 222 to 279 (GMAMNPVDHPMGGGEGKSKSGGGRRHPKSPWGQLAKGLKTRNKKKASQKLIVRGRNAK). Over residues 232–242 (MGGGEGKSKSG) the composition is skewed to gly residues. Basic residues predominate over residues 259-268 (LKTRNKKKAS).

Belongs to the universal ribosomal protein uL2 family. As to quaternary structure, part of the 50S ribosomal subunit. Forms a bridge to the 30S subunit in the 70S ribosome.

Its function is as follows. One of the primary rRNA binding proteins. Required for association of the 30S and 50S subunits to form the 70S ribosome, for tRNA binding and peptide bond formation. It has been suggested to have peptidyltransferase activity; this is somewhat controversial. Makes several contacts with the 16S rRNA in the 70S ribosome. The polypeptide is Large ribosomal subunit protein uL2 (Chlorobium phaeobacteroides (strain DSM 266 / SMG 266 / 2430)).